The following is a 229-amino-acid chain: PKHD-type hydroxylase RPA3479 (229 aa).

Residues 78–180 form the Fe2OG dioxygenase domain; the sequence is QIFPPLFNRY…RVASFFWLQS (103 aa). Residues His-98, Asp-100, and His-161 each coordinate Fe cation. Residue Arg-171 participates in 2-oxoglutarate binding.

Fe(2+) is required as a cofactor. L-ascorbate serves as cofactor.

The polypeptide is PKHD-type hydroxylase RPA3479 (Rhodopseudomonas palustris (strain ATCC BAA-98 / CGA009)).